The following is a 43-amino-acid chain: Lanthionine-containing peptide SapB (43 aa).

The first 21 residues, 1–21 (MALLDLQAMDTPAEDSFGELR), serve as a signal peptide directing secretion. 2 consecutive cross-links (lanthionine (Ser-Cys)) follow at residues 24-31 (SQVSLLVC) and 34-41 (SSLSVVLC). 2 positions are modified to 2,3-didehydroalanine (Ser): Ser-27 and Ser-37.

It belongs to the lanthionine-containing morphogen protein family. In terms of processing, maturation involves the enzymatic conversion of Ser into dehydrated AA and the formation of thioether bonds with cysteine. This is followed by membrane translocation and cleavage of the modified precursor.

Its function is as follows. Lanthionine-containing peptide devoid of antibiotic properties, involved in the formation of aerial mycelium. Suggested to self-assemble at air-water interfaces, thus providing a film of surfactant through which nascent aerial hyphae can emerge. The aerial hyphae differentiate further into spores. The sequence is that of Lanthionine-containing peptide SapB (ramS) from Streptomyces griseus.